The sequence spans 341 residues: Glycerol-1-phosphate dehydrogenase [NAD(P)+] (341 aa).

NAD(+)-binding positions include 81-85 (GKAID) and 103-106 (TTAS). Asp-108 is a binding site for substrate. Ser-112 contacts NAD(+). Residue Asp-151 coordinates substrate. Zn(2+) contacts are provided by Asp-151 and His-232. Position 236 (His-236) interacts with substrate. His-253 is a Zn(2+) binding site.

This sequence belongs to the glycerol-1-phosphate dehydrogenase family. Zn(2+) serves as cofactor.

It is found in the cytoplasm. It carries out the reaction sn-glycerol 1-phosphate + NAD(+) = dihydroxyacetone phosphate + NADH + H(+). It catalyses the reaction sn-glycerol 1-phosphate + NADP(+) = dihydroxyacetone phosphate + NADPH + H(+). Its pathway is membrane lipid metabolism; glycerophospholipid metabolism. In terms of biological role, catalyzes the NAD(P)H-dependent reduction of dihydroxyacetonephosphate (DHAP or glycerone phosphate) to glycerol 1-phosphate (G1P). The G1P thus generated is used as the glycerophosphate backbone of phospholipids in the cellular membranes of Archaea. This Methanococcus aeolicus (strain ATCC BAA-1280 / DSM 17508 / OCM 812 / Nankai-3) protein is Glycerol-1-phosphate dehydrogenase [NAD(P)+].